Reading from the N-terminus, the 311-residue chain is Malate dehydrogenase (311 aa).

NAD(+) contacts are provided by residues 7-13 (GAAGGIG) and Asp-34. Positions 81 and 87 each coordinate substrate. NAD(+) contacts are provided by residues Asn-94 and 117–119 (ITN). Substrate contacts are provided by Asn-119 and Arg-153. His-177 functions as the Proton acceptor in the catalytic mechanism. Met-227 lines the NAD(+) pocket.

The protein belongs to the LDH/MDH superfamily. MDH type 1 family. In terms of assembly, homodimer.

The enzyme catalyses (S)-malate + NAD(+) = oxaloacetate + NADH + H(+). In terms of biological role, catalyzes the reversible oxidation of malate to oxaloacetate. The polypeptide is Malate dehydrogenase (Histophilus somni (strain 129Pt) (Haemophilus somnus)).